The primary structure comprises 100 residues: Urease subunit gamma (100 aa).

This sequence belongs to the urease gamma subunit family. Heterotrimer of UreA (gamma), UreB (beta) and UreC (alpha) subunits. Three heterotrimers associate to form the active enzyme.

It localises to the cytoplasm. It catalyses the reaction urea + 2 H2O + H(+) = hydrogencarbonate + 2 NH4(+). Its pathway is nitrogen metabolism; urea degradation; CO(2) and NH(3) from urea (urease route): step 1/1. The sequence is that of Urease subunit gamma from Paenarthrobacter aurescens (strain TC1).